The chain runs to 321 residues: Aspartate carbamoyltransferase catalytic subunit (321 aa).

Positions 70 and 71 each coordinate carbamoyl phosphate. Lys98 serves as a coordination point for L-aspartate. The carbamoyl phosphate site is built by Arg120, His148, and Gln151. Arg181 and Arg235 together coordinate L-aspartate. Gly276 and Pro277 together coordinate carbamoyl phosphate.

This sequence belongs to the aspartate/ornithine carbamoyltransferase superfamily. ATCase family. Heterododecamer (2C3:3R2) of six catalytic PyrB chains organized as two trimers (C3), and six regulatory PyrI chains organized as three dimers (R2).

The enzyme catalyses carbamoyl phosphate + L-aspartate = N-carbamoyl-L-aspartate + phosphate + H(+). Its pathway is pyrimidine metabolism; UMP biosynthesis via de novo pathway; (S)-dihydroorotate from bicarbonate: step 2/3. Its function is as follows. Catalyzes the condensation of carbamoyl phosphate and aspartate to form carbamoyl aspartate and inorganic phosphate, the committed step in the de novo pyrimidine nucleotide biosynthesis pathway. This chain is Aspartate carbamoyltransferase catalytic subunit, found in Gluconacetobacter diazotrophicus (strain ATCC 49037 / DSM 5601 / CCUG 37298 / CIP 103539 / LMG 7603 / PAl5).